The primary structure comprises 150 residues: MGQLIFNQPSEDKSALEDAGDFTPRFDDRGLITAVVADAGDGELLMVAHMNAQALALTIQTGTAHYFSRSRGKIWKKGETSGNLQTVKEIRTDCDQDAIWLKVEVAGHDATCHTGRRSCFYRTVTLREGKPMLDIVDDERHFDPQDVYGK.

Position 93 (aspartate 93) interacts with Mg(2+). Cysteine 94 is a binding site for Zn(2+). Mg(2+) is bound by residues aspartate 95 and aspartate 97. Zn(2+) is bound by residues cysteine 112 and cysteine 119.

This sequence belongs to the PRA-CH family. As to quaternary structure, homodimer. Mg(2+) serves as cofactor. The cofactor is Zn(2+).

It localises to the cytoplasm. It catalyses the reaction 1-(5-phospho-beta-D-ribosyl)-5'-AMP + H2O = 1-(5-phospho-beta-D-ribosyl)-5-[(5-phospho-beta-D-ribosylamino)methylideneamino]imidazole-4-carboxamide. The protein operates within amino-acid biosynthesis; L-histidine biosynthesis; L-histidine from 5-phospho-alpha-D-ribose 1-diphosphate: step 3/9. Functionally, catalyzes the hydrolysis of the adenine ring of phosphoribosyl-AMP. This chain is Phosphoribosyl-AMP cyclohydrolase, found in Rhizobium etli (strain ATCC 51251 / DSM 11541 / JCM 21823 / NBRC 15573 / CFN 42).